The primary structure comprises 55 residues: Ferredoxin (55 aa).

2 4Fe-4S ferredoxin-type domains span residues 2 to 27 and 28 to 55; these read YFIT…SPGD and SVYV…PQQK. [4Fe-4S] cluster is bound by residues Cys8, Cys11, Cys14, Cys18, Cys37, Cys40, Cys43, and Cys47.

The cofactor is [4Fe-4S] cluster.

In terms of biological role, ferredoxins are iron-sulfur proteins that transfer electrons in a wide variety of metabolic reactions. This chain is Ferredoxin, found in Acetivibrio thermocellus (Hungateiclostridium thermocellum).